We begin with the raw amino-acid sequence, 381 residues long: Putative 8-amino-7-oxononanoate synthase (381 aa).

Arginine 22 is a substrate binding site. 109 to 110 (GF) lines the pyridoxal 5'-phosphate pocket. Substrate is bound at residue histidine 134. Residues serine 182, 207–210 (DDAH), and 233–236 (TLSK) contribute to the pyridoxal 5'-phosphate site. Residue lysine 236 is modified to N6-(pyridoxal phosphate)lysine. Threonine 345 serves as a coordination point for substrate.

This sequence belongs to the class-II pyridoxal-phosphate-dependent aminotransferase family. BioF subfamily. As to quaternary structure, homodimer. Pyridoxal 5'-phosphate serves as cofactor.

The enzyme catalyses 6-carboxyhexanoyl-[ACP] + L-alanine + H(+) = (8S)-8-amino-7-oxononanoate + holo-[ACP] + CO2. The protein operates within cofactor biosynthesis; biotin biosynthesis. Functionally, catalyzes the decarboxylative condensation of pimeloyl-[acyl-carrier protein] and L-alanine to produce 8-amino-7-oxononanoate (AON), [acyl-carrier protein], and carbon dioxide. This chain is Putative 8-amino-7-oxononanoate synthase (bioF), found in Acidiphilium cryptum (strain JF-5).